Reading from the N-terminus, the 637-residue chain is tRNA 5-methylaminomethyl-2-thiouridine biosynthesis bifunctional protein MnmC (637 aa).

The interval 1 to 231 (MPIDPARLAF…KRQMCRGRHR (231 aa)) is tRNA (mnm(5)s(2)U34)-methyltransferase. The FAD-dependent cmnm(5)s(2)U34 oxidoreductase stretch occupies residues 250–637 (IGAGLAGSST…RPARGMTREG (388 aa)).

In the N-terminal section; belongs to the methyltransferase superfamily. tRNA (mnm(5)s(2)U34)-methyltransferase family. This sequence in the C-terminal section; belongs to the DAO family. It depends on FAD as a cofactor.

It localises to the cytoplasm. The enzyme catalyses 5-aminomethyl-2-thiouridine(34) in tRNA + S-adenosyl-L-methionine = 5-methylaminomethyl-2-thiouridine(34) in tRNA + S-adenosyl-L-homocysteine + H(+). Catalyzes the last two steps in the biosynthesis of 5-methylaminomethyl-2-thiouridine (mnm(5)s(2)U) at the wobble position (U34) in tRNA. Catalyzes the FAD-dependent demodification of cmnm(5)s(2)U34 to nm(5)s(2)U34, followed by the transfer of a methyl group from S-adenosyl-L-methionine to nm(5)s(2)U34, to form mnm(5)s(2)U34. This chain is tRNA 5-methylaminomethyl-2-thiouridine biosynthesis bifunctional protein MnmC, found in Aromatoleum aromaticum (strain DSM 19018 / LMG 30748 / EbN1) (Azoarcus sp. (strain EbN1)).